We begin with the raw amino-acid sequence, 635 residues long: ADP-ribosylation factor-binding protein GGA1 (635 aa).

M1 carries the post-translational modification N-acetylmethionine. In terms of domain architecture, VHS spans 17–147 (ATNPLNKELN…MLKKQGIVKS (131 aa)). An interaction with ARF3 region spans residues 114 to 273 (KILELLYSWT…RLASDTEDND (160 aa)). The GAT domain occupies 171-298 (DEEKSKMLAR…VINLYKQLVR (128 aa)). S185 carries the phosphoserine modification. The interval 299–505 (GEEVNGDATA…ITVPLESIKP (207 aa)) is unstructured hinge. The disordered stretch occupies residues 305–349 (DATASSIPGSTSALLDLSGLDLPPPGTTQPATPTRPGNQSSPEQL). The segment covering 313–325 (GSTSALLDLSGLD) has biased composition (low complexity). Phosphoserine is present on S354. Positions 357 to 361 (DDELM) match the Autoinhibitory motif. Disordered stretches follow at residues 362–422 (SLGL…LDDL) and 455–490 (RDLQ…TPTE). Over residues 383–393 (NFQSSDGTESS) the composition is skewed to polar residues. A Phosphoserine modification is found at S417. The span at 459–476 (SKSSSPSPGAASLLHTTS) shows a compositional bias: low complexity. Residues 477–486 (PEPPGPPPQA) are compositionally biased toward pro residues. The GAE domain occupies 506–627 (SSILPVTVYD…NEMGDVDQFP (122 aa)).

The protein belongs to the GGA protein family. In terms of assembly, monomer. Interacts with GGA2 and GGA3. Binds to clathrin and activated ARFs, including ARF1, ARF5 and ARF6. Interacts with RABEP1 and RABGEF1. Interacts with the type-I membrane proteins LRP3, M6PR/CD-MPR and IGF2R/CI-MPR. Interacts (via N-terminal VHS domain) with SORL1/sorLA and SORT1 (via C-terminal cytosolic domain). Interacts with EPN4. Interacts with CCDC91. Interacts with HEATR5B/p200a. Interacts with SYNRG/gamma-synergin. Interacts (via GAE doamin) with NECAP1 and NECAP2. Interacts (via GAE domain) with AFTPH/aftiphilin. Interacts with TSG101 and UBC. Interacts with RNF11. Interacts (via VHS domain) with BACE1 (via DXXLL motif); the interaction highly increases when BACE1 is phosphorylated at 'Ser-498'. Interacts with CNST. Interacts with ADRA2B. Interacts with ARL3; the interaction recruits, in collaboration with RABEP1, PKD1:PKD2 complex to trans-Golgi network and is required for ciliary targeting. Post-translationally, phosphorylated by CK2 and dephosphorylated by PP2A. Phosphorylation of GGA1 allows the internal DXXLL motif to bind the VHS domain and to inhibit the recognition of cargo signals. In terms of processing, ubiquitinated.

It is found in the golgi apparatus. The protein resides in the trans-Golgi network membrane. It localises to the endosome membrane. The protein localises to the early endosome membrane. Functionally, plays a role in protein sorting and trafficking between the trans-Golgi network (TGN) and endosomes. Mediates the ARF-dependent recruitment of clathrin to the TGN and binds ubiquitinated proteins and membrane cargo molecules with a cytosolic acidic cluster-dileucine (DXXLL) motif. Mediates export of the GPCR receptor ADRA2B to the cell surface. Required for targeting PKD1:PKD2 complex from the trans-Golgi network to the cilium membrane. Regulates retrograde transport of proteins such as phosphorylated form of BACE1 from endosomes to the trans-Golgi network. This chain is ADP-ribosylation factor-binding protein GGA1 (Gga1), found in Mus musculus (Mouse).